A 37-amino-acid chain; its full sequence is Gene product 16.5 (37 aa).

The protein belongs to the phi29likevirus gp16.5 family.

This Bacillus phage phi15 (Bacteriophage phi-15) protein is Gene product 16.5 (16.5).